The sequence spans 457 residues: PE-PGRS family protein PE_PGRS18 (457 aa).

The 92-residue stretch at 1 to 92 (MSFVNVAPQL…SSTYAVAEAA (92 aa)) folds into the PE domain. 4 NHL repeats span residues 291-321 (FNDPHGVAVNPGGNIYVTNQGSNTVSVIDPV), 333-363 (NGPSGVAVSPVTGLVFVTNFDSNTVSVIDPN), 379-404 (GVAVNPGGNIYVTNQFSNTVSVIDPA), and 419-447 (PTGVAVNPVTGVVYVTNSLDDTVSVITGE).

This sequence belongs to the mycobacterial PE family. PGRS subfamily.

It is found in the secreted. Its subcellular location is the cell wall. Functionally, enhances mycobacterial intracellular survival, probably via altering host macrophage cytokine profiling and attenuating the cell apoptosis. Could be required for host endothelial-cell invasion. Its function is as follows. Expression in Mycobacterium smegmatis, a nonpathogenic species naturally deficient in PE_PGRS genes, results in alteration of the production of host cytokines, including IL-6, IL-1beta, IL-10 and IL-12p40, as well as enhanced survival within macrophages largely via attenuating the apoptosis of macrophages. The polypeptide is PE-PGRS family protein PE_PGRS18 (Mycobacterium tuberculosis (strain ATCC 25618 / H37Rv)).